The primary structure comprises 304 residues: GTPase Era (304 aa).

The region spanning 11-179 is the Era-type G domain; the sequence is YCGFIAIVGR…QKIVRKSLRE (169 aa). The segment at 19 to 26 is G1; the sequence is GRPNVGKS. 19–26 is a GTP binding site; sequence GRPNVGKS. The tract at residues 45–49 is G2; that stretch reads QTTRH. The G3 stretch occupies residues 66-69; that stretch reads DTPG. GTP is bound by residues 66–70 and 128–131; these read DTPGL and NKVD. The tract at residues 128–131 is G4; that stretch reads NKVD. The tract at residues 158–160 is G5; that stretch reads ISA. A KH type-2 domain is found at 210–287; the sequence is TGEELPYSVT…HLELWVKVKA (78 aa).

It belongs to the TRAFAC class TrmE-Era-EngA-EngB-Septin-like GTPase superfamily. Era GTPase family. As to quaternary structure, monomer.

It localises to the cytoplasm. The protein localises to the cell inner membrane. In terms of biological role, an essential GTPase that binds both GDP and GTP, with rapid nucleotide exchange. Plays a role in 16S rRNA processing and 30S ribosomal subunit biogenesis and possibly also in cell cycle regulation and energy metabolism. This chain is GTPase Era, found in Haemophilus ducreyi (strain 35000HP / ATCC 700724).